The chain runs to 402 residues: Speedy protein E2 (402 aa).

Residues Met-1 to Glu-89 form a disordered region. A compositionally biased stretch (polar residues) spans Gly-16 to Tyr-39. The span at Asp-76–Glu-89 shows a compositional bias: acidic residues.

Belongs to the Speedy/Ringo family.

This chain is Speedy protein E2 (SPDYE2), found in Homo sapiens (Human).